Consider the following 623-residue polypeptide: MESKVRGEEERQKVERLVEKLKVHNNNNNRSSTPAHISFVPNSIVVSSRKLAAAFWEFHQYHYKDEEDCSYSYLSSASAKMHRGPNGFAGASSRRQRHGKAVAVKENGLDLSQFLRDPSPDHQPDSAGSLRRQIGQMLIKHHQSIDRNNHALQPVSPASYGSSLEVTTYNKAVTPSSSLEFRGRPSREPHYNLKTSTELLKVLNRIWSLEEQHVSNISLIKALKTEVAHSRVRIKELLRYQQADRHELDSVVKQLAEEKLLSKNKEVERMSSAVQSVRKALEDERKLRKRSESLHRKMARELSEVKSSLSNCVKELERGSKSNKMMELLCDEFAKGIKSYEEEIHGLKKKNLDKDWAGRGGGDQLVLHIAESWLDERMQMRLEGGDTLNGKNRSVLDKLEVEIETFLQEKRNEIPRNRRNSLESVPFNTLSAPPRDVDCEEDSGGSDSNCFELKKPAESYGDETKKPNQHNKDGSIDEKPKSPSSFQVNFEDQMAWALSSNGKKKTTRAIEDEEEEEDVKPENSNNNKKPENECATTNKNDVMGEMIRTHRRLLSETREIDEASCNFPSSRRQASPVRQWISRTVAPDLLGPSEIAIAHGVKDNTLKTKLANSSKSRLRLFKG.

The stretch at 256–351 (AEEKLLSKNK…EEIHGLKKKN (96 aa)) forms a coiled coil. Disordered stretches follow at residues 417-485 (NRRN…SPSS) and 497-536 (ALSSNGKKKTTRAIEDEEEEEDVKPENSNNNKKPENECAT). Residues 422-431 (LESVPFNTLS) are compositionally biased toward polar residues. Residues 452–481 (ELKKPAESYGDETKKPNQHNKDGSIDEKPK) show a composition bias toward basic and acidic residues.

This is an uncharacterized protein from Arabidopsis thaliana (Mouse-ear cress).